We begin with the raw amino-acid sequence, 430 residues long: C4-dicarboxylate transport protein (430 aa).

Helical transmembrane passes span 9-29 (VLYV…HFYP), 45-65 (LIKM…IAGM), 79-99 (LLYF…ATHL), 149-169 (GEIL…AHLG), 185-205 (VLFG…FGAM), 223-243 (LIGT…GAIA), 308-328 (IYMT…LTWM), and 356-376 (AATL…ILGI).

The protein belongs to the dicarboxylate/amino acid:cation symporter (DAACS) (TC 2.A.23) family.

It localises to the cell inner membrane. In terms of biological role, responsible for the transport of dicarboxylates such as succinate, fumarate, and malate from the periplasm across the membrane. The protein is C4-dicarboxylate transport protein of Burkholderia orbicola (strain MC0-3).